The chain runs to 121 residues: Large ribosomal subunit protein uL18 (121 aa).

It belongs to the universal ribosomal protein uL18 family. As to quaternary structure, part of the 50S ribosomal subunit; part of the 5S rRNA/L5/L18/L25 subcomplex. Contacts the 5S and 23S rRNAs.

In terms of biological role, this is one of the proteins that bind and probably mediate the attachment of the 5S RNA into the large ribosomal subunit, where it forms part of the central protuberance. This Acidovorax ebreus (strain TPSY) (Diaphorobacter sp. (strain TPSY)) protein is Large ribosomal subunit protein uL18.